We begin with the raw amino-acid sequence, 670 residues long: MTIFDSDEEELVTTLSDFEPPVQIDTSFNKFIVVDNIPVAPEAKHEKLKSILVKIYQNRPGAEVVGIHLALDAQRNTKGFAFIEYSKKESAIDAATSLNNYPLDKSHTLKVNLLDDFSKFANFEETYKPPTREDFKPKPNYNQWLSDPKALKGYDQFVTRYGDYTDICWNEMHVGKPMVEKSSVSLTSSYVQWSNTGSYLVTFHPDGIALYGGKDWIQVNLFEHRGVQLVDFSPEDKYLITFAPIASDNPNSPKSIVVWDVRSGKKLRSFLAPPKEQFTWPAFQWSAKDKYIARIEQLEKGINIYETPSMNLLDDKIFEVKGIKDFSWSPTDLSLAYFVPANDPLPAKICLVEMPSKKLLAEKSIWGATDARFHWQNEGAYLCVKTDKVATGKTKKEKIPTTSFELFRTHEPNVPIESFEIQYAIKAFSWEPRGKRICIIHGEFKMNMFVSFFEVQKTSVKLISKLENRKLNTIFWSPRGTLVLLANLGDTGELEFYNTQDCESYGTQEHLQCTGVDWNPSGRYVTTFVSHWKVQTDTGFNIWSFNGDLVYSVLKDRFFQFNWRPRPKFMLTNKEINQIKQNIKKYQEKFDKQDEDDNKAIQHIEQTRLDNLMKEFLSFLQKGEQEYQALEPTRKQLGSYEDIDPNDIYESIETIEELIDIKTIVLKKIN.

The 87-residue stretch at 30–116 folds into the RRM domain; sequence KFIVVDNIPV…HTLKVNLLDD (87 aa). 4 WD repeats span residues 183 to 221, 222 to 269, 466 to 507, and 509 to 553; these read SVSL…QVNL, FEHR…KLRS, LENR…SYGT, and EHLQ…VYSV. Residues 568-600 adopt a coiled-coil conformation; the sequence is KFMLTNKEINQIKQNIKKYQEKFDKQDEDDNKA.

The protein belongs to the eIF-3 subunit B family. Component of the eukaryotic translation initiation factor 3 (eIF-3) complex.

It localises to the cytoplasm. Functionally, RNA-binding component of the eukaryotic translation initiation factor 3 (eIF-3) complex, which is involved in protein synthesis of a specialized repertoire of mRNAs and, together with other initiation factors, stimulates binding of mRNA and methionyl-tRNAi to the 40S ribosome. The eIF-3 complex specifically targets and initiates translation of a subset of mRNAs involved in cell proliferation. In Dictyostelium discoideum (Social amoeba), this protein is Eukaryotic translation initiation factor 3 subunit B (eif3B).